Consider the following 135-residue polypeptide: UPF0299 membrane protein ECA2828 (135 aa).

The next 4 membrane-spanning stretches (helical) occupy residues 5-25 (FIVC…LLAG), 30-50 (ALLP…FTLL), 63-83 (GCYL…VGVM), and 93-113 (FGPI…VVGF).

It belongs to the UPF0299 family.

Its subcellular location is the cell inner membrane. The sequence is that of UPF0299 membrane protein ECA2828 from Pectobacterium atrosepticum (strain SCRI 1043 / ATCC BAA-672) (Erwinia carotovora subsp. atroseptica).